The sequence spans 330 residues: MKKQFIQKQQQISFVKSFFSRQLEQQLGLIEVQAPILSRVGDGTQDNLSGSEKAVQVKVKSLPDATFEVVHSLAKWKRKTLGRFDFGADQGIYTHMKALRPDEDRLSAIHSVYVDQWDWERVMGDGERNLAYLKSTVNKIYAAIKETEAAISAEFDIKPFLPEQIHFIHSESLRAKFPDLDAKGRERAIAKELGAVFLIGIGGKLADGKSHDVRAPDYDDWTSPSAEGFAGLNGDIIVWNPVLEDAFEISSMGIRVDAEALKRQLALTSDEDRLKLEWHQSLLNGEMPQTIGGGIGQSRLVMLLLQQQHIGQVQCGVWGPEISEKVEGLL.

Belongs to the class-II aminoacyl-tRNA synthetase family. AsnA subfamily.

Its subcellular location is the cytoplasm. It catalyses the reaction L-aspartate + NH4(+) + ATP = L-asparagine + AMP + diphosphate + H(+). The protein operates within amino-acid biosynthesis; L-asparagine biosynthesis; L-asparagine from L-aspartate (ammonia route): step 1/1. The chain is Aspartate--ammonia ligase from Yersinia enterocolitica serotype O:8 / biotype 1B (strain NCTC 13174 / 8081).